The sequence spans 354 residues: UDP-3-O-acylglucosamine N-acyltransferase (354 aa).

The Proton acceptor role is filled by His245.

Belongs to the transferase hexapeptide repeat family. LpxD subfamily. As to quaternary structure, homotrimer.

It catalyses the reaction a UDP-3-O-[(3R)-3-hydroxyacyl]-alpha-D-glucosamine + a (3R)-hydroxyacyl-[ACP] = a UDP-2-N,3-O-bis[(3R)-3-hydroxyacyl]-alpha-D-glucosamine + holo-[ACP] + H(+). The protein operates within bacterial outer membrane biogenesis; LPS lipid A biosynthesis. Its function is as follows. Catalyzes the N-acylation of UDP-3-O-acylglucosamine using 3-hydroxyacyl-ACP as the acyl donor. Is involved in the biosynthesis of lipid A, a phosphorylated glycolipid that anchors the lipopolysaccharide to the outer membrane of the cell. This Anaeromyxobacter dehalogenans (strain 2CP-C) protein is UDP-3-O-acylglucosamine N-acyltransferase.